Here is a 75-residue protein sequence, read N- to C-terminus: UPF0729 protein C18orf32 homolog (75 aa).

The tract at residues 1 to 37 (MVCIPCIVIPVLLWVYKRFLEPVLYPIISPIISRFWR) is necessary for its localzation to the endoplasmic reticulum and lipid droplets. Residues 43–65 (DTPQQKTSTAECNGAANGSTANG) are compositionally biased toward polar residues. Positions 43 to 75 (DTPQQKTSTAECNGAANGSTANGPKTVADKKAD) are disordered.

Belongs to the UPF0729 family.

The protein localises to the endoplasmic reticulum. It is found in the lipid droplet. The chain is UPF0729 protein C18orf32 homolog from Danio rerio (Zebrafish).